Consider the following 273-residue polypeptide: Undecaprenyl-diphosphatase (273 aa).

Transmembrane regions (helical) follow at residues Ser-6–Ser-26, Ala-45–Trp-65, Leu-90–His-110, Leu-116–Ala-136, Tyr-190–Leu-210, Gly-222–Ile-242, and Ile-252–Phe-272.

The protein belongs to the UppP family.

It localises to the cell inner membrane. The catalysed reaction is di-trans,octa-cis-undecaprenyl diphosphate + H2O = di-trans,octa-cis-undecaprenyl phosphate + phosphate + H(+). In terms of biological role, catalyzes the dephosphorylation of undecaprenyl diphosphate (UPP). Confers resistance to bacitracin. The chain is Undecaprenyl-diphosphatase from Shigella sonnei (strain Ss046).